The primary structure comprises 532 residues: Muscarinic acetylcholine receptor M5 (532 aa).

At 1–29 the chain is on the extracellular side; the sequence is MEGDSYHNATTVNGTPVNHQPLERHRLWE. N-linked (GlcNAc...) asparagine glycosylation occurs at N8. The chain crosses the membrane as a helical span at residues 30–53; that stretch reads VITIAAVTAVVSLITIVGNVLVMI. At 54–66 the chain is on the cytoplasmic side; sequence SFKVNSQLKTVNN. A helical transmembrane segment spans residues 67-87; it reads YYLLSLACADLIIGIFSMNLY. Residues 88-104 lie on the Extracellular side of the membrane; that stretch reads TTYILMGRWALGSLACD. Residues C103 and C183 are joined by a disulfide bond. Residues 105–126 form a helical membrane-spanning segment; sequence LWLALDYVASNASVMNLLVISF. The Cytoplasmic segment spans residues 127-146; that stretch reads DRYFSITRPLTYRAKRTPKR. A helical transmembrane segment spans residues 147–169; sequence AGIMIGLAWLISFILWAPAILCW. The Extracellular segment spans residues 170–191; sequence QYLVGKRTVPLDECQIQFLSEP. The helical transmembrane segment at 192–214 threads the bilayer; it reads TITFGTAIAAFYIPVSVMTILYC. Over 215–443 the chain is Cytoplasmic; it reads RIYRETEKRT…LVKERKAAQT (229 aa). The interval 262 to 294 is disordered; that stretch reads AQRERNQASWSSSRRSTSTTGKPSQATGPSANW. The span at 270-281 shows a compositional bias: low complexity; that stretch reads SWSSSRRSTSTT. Residues 282 to 291 are compositionally biased toward polar residues; the sequence is GKPSQATGPS. Residues 444-464 form a helical membrane-spanning segment; sequence LSAILLAFIITWTPYNIMVLV. The Extracellular portion of the chain corresponds to 465-478; that stretch reads STFCDKCVPVTLWH. The chain crosses the membrane as a helical span at residues 479–498; sequence LGYWLCYVNSTVNPICYALC. Residues 499-532 are Cytoplasmic-facing; the sequence is NRTFRKTFKMLLLCRWKKKKVEEKLYWQGNSKLP. Phosphothreonine is present on residues T501 and T505.

This sequence belongs to the G-protein coupled receptor 1 family. Muscarinic acetylcholine receptor subfamily. CHRM5 sub-subfamily.

It is found in the cell membrane. The protein resides in the postsynaptic cell membrane. The muscarinic acetylcholine receptor mediates various cellular responses, including inhibition of adenylate cyclase, breakdown of phosphoinositides and modulation of potassium channels through the action of G proteins. Primary transducing effect is Pi turnover. The chain is Muscarinic acetylcholine receptor M5 (CHRM5) from Homo sapiens (Human).